Consider the following 365-residue polypeptide: Beta-parvin (365 aa).

Residues 1–12 (MSSAPPRSPTPR) show a composition bias toward pro residues. Residues 1 to 52 (MSSAPPRSPTPRAPKMKKDESFLGKLGGTLARKKKTREVTDLQEEGKSAINS) form a disordered region. Ser-8 carries the phosphoserine modification. The span at 37–47 (REVTDLQEEGK) shows a compositional bias: basic and acidic residues. 2 consecutive Calponin-homology (CH) domains span residues 88 to 195 (KELV…MHFR) and 255 to 362 (NLVK…TKYK).

Belongs to the parvin family. Interacts with ILK, ARHGEF6, PXN (via LD motifs), ACTN2 and actin. Interacts with DYSF. In terms of processing, phosphorylated by ILK. As to expression, expressed predominantly in heart and moderately in spleen, lung and skeletal muscle.

It is found in the cell junction. Its subcellular location is the focal adhesion. It localises to the cell membrane. The protein resides in the cytoplasm. The protein localises to the cytoskeleton. It is found in the cell projection. Its subcellular location is the lamellipodium. It localises to the myofibril. The protein resides in the sarcomere. The protein localises to the z line. Its function is as follows. Adapter protein that plays a role in integrin signaling via ILK and in activation of the GTPases CDC42 and RAC1 by guanine exchange factors, such as ARHGEF6. Is involved in the reorganization of the actin cytoskeleton and formation of lamellipodia. Plays a role in cell adhesion, cell spreading, establishment or maintenance of cell polarity, and cell migration. The sequence is that of Beta-parvin (Parvb) from Mus musculus (Mouse).